The sequence spans 282 residues: Succinate dehydrogenase [ubiquinone] iron-sulfur subunit, mitochondrial (282 aa).

The transit peptide at 1 to 21 (MLRGSTSVCRSLELVTQAARY) directs the protein to the mitochondrion. The region spanning 39 to 129 (EIYRFNPEEP…TTKIYPLPHM (91 aa)) is the 2Fe-2S ferredoxin-type domain. The [2Fe-2S] cluster site is built by Cys-89, Cys-94, Cys-97, and Cys-109. Residues 172 to 202 (EQEKLDGLYECILCACCSASCPSYWWNADKY) enclose the 4Fe-4S ferredoxin-type domain. Positions 182, 185, and 188 each coordinate [4Fe-4S] cluster. [3Fe-4S] cluster is bound at residue Cys-192. Trp-197 contacts a rhodoquinol. Trp-197 is an a ubiquinone binding site. [3Fe-4S] cluster is bound by residues Cys-239 and Cys-245. Residue Cys-249 coordinates [4Fe-4S] cluster.

This sequence belongs to the succinate dehydrogenase/fumarate reductase iron-sulfur protein family. In terms of assembly, component of the mitochondrial electron transport chain complex II composed of four subunits: a flavoprotein (Fp), an iron-sulfur protein (Ip), and a large cytochrome b (CybL) subunit and a small cytochrome b (CybS) subunit. There are 2 developmental stage-specific forms of complex II which have the Ip and CybL subunits in common. Complex II from the free-living larvae (aerobic environment) acts as a succinate dehydrogenase and is composed of the common subunit Ip and CybL and the stage specific subunits FpL and CybSL. Complex II from parasitic larvae and adults (anaerobic environment) acts as a fumarate reductase and is composed of the common subunit Ip and CybL and the stage specific subunits FpA and CybSA. [2Fe-2S] cluster is required as a cofactor. The cofactor is [3Fe-4S] cluster. Requires [4Fe-4S] cluster as cofactor. In terms of tissue distribution, expressed in adult muscles (at protein level).

The protein localises to the mitochondrion inner membrane. The catalysed reaction is a ubiquinone + succinate = a ubiquinol + fumarate. The enzyme catalyses a rhodoquinone + succinate = a rhodoquinol + fumarate. It participates in carbohydrate metabolism; tricarboxylic acid cycle; fumarate from succinate (eukaryal route): step 1/1. With respect to regulation, inhibited by the fungicide flutolanil. Iron-sulfur protein (Ip) subunit of the mitochondrial electron transport chain complex II which, together with the flavoprotein (Fp) subunit forms the catalytic core of the complex. During the free-living egg-larvae stages, which occur in an aerobic environment, complex II acts as a succinate dehydrogenase by transferring electrons from succinate to ubiquinone. During the parasitic larvae and adult stages, which occur in an anaerobic environment, complex II acts as a fumarate reductase by transferring electrons from rhodoquinol to fumarate. This chain is Succinate dehydrogenase [ubiquinone] iron-sulfur subunit, mitochondrial, found in Ascaris suum (Pig roundworm).